The following is a 153-amino-acid chain: D-aminoacyl-tRNA deacylase (153 aa).

The Gly-cisPro motif, important for rejection of L-amino acids motif lies at G137 to P138.

It belongs to the DTD family. As to quaternary structure, homodimer.

It localises to the cytoplasm. It carries out the reaction glycyl-tRNA(Ala) + H2O = tRNA(Ala) + glycine + H(+). The enzyme catalyses a D-aminoacyl-tRNA + H2O = a tRNA + a D-alpha-amino acid + H(+). An aminoacyl-tRNA editing enzyme that deacylates mischarged D-aminoacyl-tRNAs. Also deacylates mischarged glycyl-tRNA(Ala), protecting cells against glycine mischarging by AlaRS. Acts via tRNA-based rather than protein-based catalysis; rejects L-amino acids rather than detecting D-amino acids in the active site. By recycling D-aminoacyl-tRNA to D-amino acids and free tRNA molecules, this enzyme counteracts the toxicity associated with the formation of D-aminoacyl-tRNA entities in vivo and helps enforce protein L-homochirality. This Methylococcus capsulatus (strain ATCC 33009 / NCIMB 11132 / Bath) protein is D-aminoacyl-tRNA deacylase.